A 308-amino-acid polypeptide reads, in one-letter code: Nodulation protein D 1 (308 aa).

Residues 6–63 (LDLNLLVALDALMTERKLTAAARRINLSQPAMSAAIARLRTYFGDELFSMQGRELIPT) form the HTH lysR-type domain. Residues 23–42 (LTAAARRINLSQPAMSAAIA) constitute a DNA-binding region (H-T-H motif).

It belongs to the LysR transcriptional regulatory family.

In terms of biological role, nodD regulates the expression of the nodABCFE genes which encode other nodulation proteins. NodD is also a negative regulator of its own expression. Binds flavonoids as inducers. The chain is Nodulation protein D 1 (nodD1) from Rhizobium meliloti (strain 1021) (Ensifer meliloti).